The sequence spans 394 residues: Phosphoglycerate kinase (394 aa).

Substrate-binding positions include 21–23, Arg-36, 59–62, Arg-118, and Arg-151; these read DFN and HLGR. Position 183 is a phosphoserine (Ser-183). Lys-201 is a binding site for ATP. At Thr-299 the chain carries Phosphothreonine. Residues Glu-323 and 350 to 353 contribute to the ATP site; that span reads GGDS.

The protein belongs to the phosphoglycerate kinase family. Monomer.

The protein resides in the cytoplasm. It carries out the reaction (2R)-3-phosphoglycerate + ATP = (2R)-3-phospho-glyceroyl phosphate + ADP. It participates in carbohydrate degradation; glycolysis; pyruvate from D-glyceraldehyde 3-phosphate: step 2/5. The polypeptide is Phosphoglycerate kinase (Geobacillus kaustophilus (strain HTA426)).